The primary structure comprises 198 residues: Nucleoplasmin (198 aa).

Positions 35–38 (SDED) are acidic tract A1. The segment covering 125 to 145 (SWAEEEGEEEVEEEEEEEDPE) has biased composition (acidic residues). Residues 125-198 (SWAEEEGEEE…GRGRKPAAKK (74 aa)) are disordered. The acidic tract A2 stretch occupies residues 128–145 (EEEGEEEVEEEEEEEDPE). Residues 150-167 (AVKRPAASKKGSQAKKKK) show a composition bias toward basic residues. The Bipartite nuclear localization signal signature appears at 152–167 (KRPAASKKGSQAKKKK). The acidic tract A3 stretch occupies residues 172–174 (EEE). Residues 183–198 (KKGKGAGRGRKPAAKK) are compositionally biased toward basic residues.

This sequence belongs to the nucleoplasmin family. In terms of assembly, homopentamer. As to expression, expressed in oocytes.

It is found in the nucleus. Its function is as follows. Acts as a chaperone for histones, such as histone H2A-H2B, and thus regulates the assembly of nucleosome cores. Involved in chromatin remodeling, especially during fertilization and early embryonic development. May be involved in sperm chromatin decondensation during fertilization. The chain is Nucleoplasmin from Rhinella marina (Cane toad).